The chain runs to 569 residues: Serine/threonine-protein kinase gad8 (569 aa).

Positions 19-63 are disordered; that stretch reads GLNSGGSSFTRGLKNSTLSSTSSRKSSDEKSRKSSEDKRSPQSTV. Residues 31 to 42 are compositionally biased toward low complexity; that stretch reads LKNSTLSSTSSR. The span at 43–58 shows a compositional bias: basic and acidic residues; it reads KSSDEKSRKSSEDKRS. In terms of domain architecture, C2 spans 45-202; the sequence is SDEKSRKSSE…IVNKLTDEWV (158 aa). The 256-residue stretch at 230–485 folds into the Protein kinase domain; it reads FELLKVVGKG…AQEIKNHPFF (256 aa). ATP is bound by residues 236–244 and Lys-259; that span reads VGKGSFGKV. The active-site Proton acceptor is Asp-353. Thr-387 bears the Phosphothreonine; by ksg1 mark. An AGC-kinase C-terminal domain is found at 486–557; that stretch reads DDIDWKKLCA…QRPTTIDTSD (72 aa). Phosphoserine; by TORC2 is present on residues Ser-527 and Ser-546.

The protein belongs to the protein kinase superfamily. AGC Ser/Thr protein kinase family. Phosphorylated by ksg1 and target of rapamycin complex 2 (TORC2), affecting the kinase activity of gad8 in a nutrient-dependent manner.

It catalyses the reaction L-seryl-[protein] + ATP = O-phospho-L-seryl-[protein] + ADP + H(+). The catalysed reaction is L-threonyl-[protein] + ATP = O-phospho-L-threonyl-[protein] + ADP + H(+). In terms of biological role, involved in a signaling module for sexual development and cell growth under stressed conditions. Required for G1 arrest under nitrogen starvation and for growth at high temperature and osmolarity. In Schizosaccharomyces pombe (strain 972 / ATCC 24843) (Fission yeast), this protein is Serine/threonine-protein kinase gad8.